The sequence spans 555 residues: Sulfite reductase [NADPH] hemoprotein beta-component (555 aa).

4 residues coordinate [4Fe-4S] cluster: C430, C436, C475, and C479. Siroheme is bound at residue C479.

The protein belongs to the nitrite and sulfite reductase 4Fe-4S domain family. In terms of assembly, alpha(8)-beta(8). The alpha component is a flavoprotein, the beta component is a hemoprotein. Requires siroheme as cofactor. It depends on [4Fe-4S] cluster as a cofactor.

The catalysed reaction is hydrogen sulfide + 3 NADP(+) + 3 H2O = sulfite + 3 NADPH + 4 H(+). It functions in the pathway sulfur metabolism; hydrogen sulfide biosynthesis; hydrogen sulfide from sulfite (NADPH route): step 1/1. Functionally, component of the sulfite reductase complex that catalyzes the 6-electron reduction of sulfite to sulfide. This is one of several activities required for the biosynthesis of L-cysteine from sulfate. The sequence is that of Sulfite reductase [NADPH] hemoprotein beta-component from Leptospira biflexa serovar Patoc (strain Patoc 1 / Ames).